Consider the following 419-residue polypeptide: Histidine--tRNA ligase (419 aa).

Belongs to the class-II aminoacyl-tRNA synthetase family. In terms of assembly, homodimer.

It is found in the cytoplasm. The enzyme catalyses tRNA(His) + L-histidine + ATP = L-histidyl-tRNA(His) + AMP + diphosphate + H(+). In Novosphingobium aromaticivorans (strain ATCC 700278 / DSM 12444 / CCUG 56034 / CIP 105152 / NBRC 16084 / F199), this protein is Histidine--tRNA ligase.